We begin with the raw amino-acid sequence, 291 residues long: 4-diphosphocytidyl-2-C-methyl-D-erythritol kinase (291 aa).

Lys-8 is a catalytic residue. Position 89–99 (89–99) interacts with ATP; sequence PIGSGIGGGSS. Asp-131 is a catalytic residue.

It belongs to the GHMP kinase family. IspE subfamily.

The enzyme catalyses 4-CDP-2-C-methyl-D-erythritol + ATP = 4-CDP-2-C-methyl-D-erythritol 2-phosphate + ADP + H(+). It functions in the pathway isoprenoid biosynthesis; isopentenyl diphosphate biosynthesis via DXP pathway; isopentenyl diphosphate from 1-deoxy-D-xylulose 5-phosphate: step 3/6. In terms of biological role, catalyzes the phosphorylation of the position 2 hydroxy group of 4-diphosphocytidyl-2C-methyl-D-erythritol. The polypeptide is 4-diphosphocytidyl-2-C-methyl-D-erythritol kinase (Chlamydia abortus (strain DSM 27085 / S26/3) (Chlamydophila abortus)).